The primary structure comprises 586 residues: YTH domain-containing family protein 2 (586 aa).

3 disordered regions span residues 98 to 128 (LKEKVKQSRALRQSVNNAAEQQPSTKPQPVQ), 141 to 181 (SQDQ…KESP), and 301 to 464 (QGLA…PLVS). 3 stretches are compositionally biased toward polar residues: residues 107–128 (ALRQSVNNAAEQQPSTKPQPVQ), 169–181 (TLPTTPRTIKESP), and 352–368 (SSQAALSCKSKQSTDIQ). Residues 398-418 (CARRHRSSSPRGRSGSHKSRR) show a composition bias toward basic residues. Residues 421-436 (TDSPVSRSTTKSTPSR) show a composition bias toward polar residues. In terms of domain architecture, YTH spans 435–576 (SRARQPGHRD…YCGRDLLRLM (142 aa)). Over residues 441 to 458 (GHRDYREYRDDRNRDTKP) the composition is skewed to basic and acidic residues.

This sequence belongs to the YTHDF family. YTHDF1 subfamily.

Specifically recognizes and binds N6-methyladenosine (m6A)-containing mRNAs, and regulates their stability. M6A is a modification present at internal sites of mRNAs and some non-coding RNAs and plays a role in mRNA stability and processing. Plays a role in pathogenicity towards plant host. In Pyricularia oryzae (strain 70-15 / ATCC MYA-4617 / FGSC 8958) (Rice blast fungus), this protein is YTH domain-containing family protein 2.